Reading from the N-terminus, the 214-residue chain is tRNA (guanine-N(7)-)-methyltransferase (214 aa).

S-adenosyl-L-methionine-binding residues include Glu-43, Glu-68, Asp-95, and Asp-117. Asp-117 is an active-site residue. Residues Lys-121, Asp-153, and Thr-190–Glu-193 each bind substrate.

The protein belongs to the class I-like SAM-binding methyltransferase superfamily. TrmB family.

The enzyme catalyses guanosine(46) in tRNA + S-adenosyl-L-methionine = N(7)-methylguanosine(46) in tRNA + S-adenosyl-L-homocysteine. Its pathway is tRNA modification; N(7)-methylguanine-tRNA biosynthesis. In terms of biological role, catalyzes the formation of N(7)-methylguanine at position 46 (m7G46) in tRNA. The chain is tRNA (guanine-N(7)-)-methyltransferase from Staphylococcus haemolyticus (strain JCSC1435).